A 618-amino-acid polypeptide reads, in one-letter code: Medium-chain acyl-CoA ligase ACSF2, mitochondrial (618 aa).

The transit peptide at Met1 to Phe44 directs the protein to the mitochondrion. Lys182 is subject to N6-acetyllysine. The residue at position 185 (Lys185) is an N6-acetyllysine; alternate. Lys185 is subject to N6-succinyllysine; alternate. Residue Thr266–Lys274 coordinates ATP. N6-acetyllysine is present on residues Lys343 and Lys401. Position 481 is an N6-succinyllysine (Lys481). Residues Asp496 and Arg511 each contribute to the ATP site. At Lys513 the chain carries N6-acetyllysine. An N6-acetyllysine; alternate mark is found at Lys547 and Lys573. Lys547 and Lys573 each carry N6-succinyllysine; alternate. Residue Lys602 participates in ATP binding. Lys602 is subject to N6-succinyllysine.

This sequence belongs to the ATP-dependent AMP-binding enzyme family.

The protein resides in the mitochondrion. The catalysed reaction is a medium-chain fatty acid + ATP + CoA = a medium-chain fatty acyl-CoA + AMP + diphosphate. It catalyses the reaction octanoate + ATP + CoA = octanoyl-CoA + AMP + diphosphate. Acyl-CoA synthases catalyze the initial reaction in fatty acid metabolism, by forming a thioester with CoA. Has some preference toward medium-chain substrates. Plays a role in adipocyte differentiation. This is Medium-chain acyl-CoA ligase ACSF2, mitochondrial from Macaca fascicularis (Crab-eating macaque).